Here is a 334-residue protein sequence, read N- to C-terminus: N-acetylmuramoyl-L-alanine amidase sle1 (334 aa).

A signal peptide spans 1–25 (MQKKVIAAIIGTSAISAVAATQANA). One can recognise a LysM 1 domain in the interval 27–70 (TTHTVKPGESVWAISNKYGISIAKLKSLNNLTSNLIFPNQVLKV). The segment covering 71–86 (SGSSNSTSNSSRPSTN) has biased composition (low complexity). Residues 71-90 (SGSSNSTSNSSRPSTNSGGG) are disordered. LysM domains are found at residues 91-134 (SYYT…KLKV) and 158-201 (SYYT…KLKV). One can recognise a Peptidase C51 domain in the interval 210 to 334 (GSATTTNRGY…YQVNNYRYIH (125 aa)).

The protein localises to the secreted. The protein resides in the cell surface. It catalyses the reaction Hydrolyzes the link between N-acetylmuramoyl residues and L-amino acid residues in certain cell-wall glycopeptides.. Peptidoglycan hydrolase involved in the splitting of the septum during cell division. The polypeptide is N-acetylmuramoyl-L-alanine amidase sle1 (sle1) (Staphylococcus aureus (strain USA300)).